Reading from the N-terminus, the 287-residue chain is Inorganic pyrophosphatase (287 aa).

Arg79 serves as a coordination point for diphosphate. Asp116, Asp121, and Asp153 together coordinate Mg(2+).

Belongs to the PPase family. Mg(2+) is required as a cofactor.

Its subcellular location is the cytoplasm. It catalyses the reaction diphosphate + H2O = 2 phosphate + H(+). This chain is Inorganic pyrophosphatase (IPP1), found in Debaryomyces hansenii (strain ATCC 36239 / CBS 767 / BCRC 21394 / JCM 1990 / NBRC 0083 / IGC 2968) (Yeast).